Here is a 451-residue protein sequence, read N- to C-terminus: ADP-specific phosphofructokinase (451 aa).

Residues 1-450 (MSVPQDVSIF…FITYVNYLKR (450 aa)) enclose the ADPK domain. Residues Glu-261, Glu-291, and Asp-434 each coordinate Mg(2+). The Proton acceptor role is filled by Asp-434.

Belongs to the carbohydrate kinase PfkC family. It depends on Mg(2+) as a cofactor.

The protein resides in the cytoplasm. The enzyme catalyses beta-D-fructose 6-phosphate + ADP = beta-D-fructose 1,6-bisphosphate + AMP + H(+). Its pathway is carbohydrate degradation; glycolysis. Its function is as follows. Catalyzes the phosphorylation of fructose 6-phosphate to fructose 1,6-bisphosphate using ADP as the phosphate donor. This Pyrococcus abyssi (strain GE5 / Orsay) protein is ADP-specific phosphofructokinase.